Consider the following 125-residue polypeptide: Large ribosomal subunit protein bL17 (125 aa).

Belongs to the bacterial ribosomal protein bL17 family. Part of the 50S ribosomal subunit. Contacts protein L32.

The protein is Large ribosomal subunit protein bL17 of Acinetobacter baumannii (strain AB307-0294).